A 339-amino-acid chain; its full sequence is MAVVLDLLNKDTRPKLDAPARPRHPEKAHRPDTAIQRKPDWIRVKAPGSKLWAETKDIVRANNLVTVCEEAGCPNIGECWEKRHATFMIMGDTCTRACSFCNVRTGLPAALDEAEPEKVAEAVAKLGLHHVVVTSVDRDDLKDGGAEHFSRTIVAIRRASPGTTVEILTPDFLRKPGALEVVVAAKPDVFNHNMETVPGKYVTVRPGARYFHSVRLLQRVKELDPTIFTKSGIMVGLGEERNEVVQLMDDLRSAEVDFLTIGQYLQPTRKHHEVVRFVPPDEFKAYETTAYAKGFLLVSATPLTRSSHHAGEDFARLKAARLAKLGPAPVAASIRAVNA.

Residues 13–35 (RPKLDAPARPRHPEKAHRPDTAI) are disordered. 7 residues coordinate [4Fe-4S] cluster: C68, C73, C79, C94, C98, C101, and S307. Positions 80 to 296 (WEKRHATFMI…ETTAYAKGFL (217 aa)) constitute a Radical SAM core domain.

The protein belongs to the radical SAM superfamily. Lipoyl synthase family. Requires [4Fe-4S] cluster as cofactor.

The protein resides in the cytoplasm. The enzyme catalyses [[Fe-S] cluster scaffold protein carrying a second [4Fe-4S](2+) cluster] + N(6)-octanoyl-L-lysyl-[protein] + 2 oxidized [2Fe-2S]-[ferredoxin] + 2 S-adenosyl-L-methionine + 4 H(+) = [[Fe-S] cluster scaffold protein] + N(6)-[(R)-dihydrolipoyl]-L-lysyl-[protein] + 4 Fe(3+) + 2 hydrogen sulfide + 2 5'-deoxyadenosine + 2 L-methionine + 2 reduced [2Fe-2S]-[ferredoxin]. It functions in the pathway protein modification; protein lipoylation via endogenous pathway; protein N(6)-(lipoyl)lysine from octanoyl-[acyl-carrier-protein]: step 2/2. Functionally, catalyzes the radical-mediated insertion of two sulfur atoms into the C-6 and C-8 positions of the octanoyl moiety bound to the lipoyl domains of lipoate-dependent enzymes, thereby converting the octanoylated domains into lipoylated derivatives. This chain is Lipoyl synthase, found in Methylorubrum extorquens (strain PA1) (Methylobacterium extorquens).